Reading from the N-terminus, the 253-residue chain is DNA repair protein RecO (253 aa).

The protein belongs to the RecO family.

Its function is as follows. Involved in DNA repair and RecF pathway recombination. This is DNA repair protein RecO from Staphylococcus epidermidis (strain ATCC 35984 / DSM 28319 / BCRC 17069 / CCUG 31568 / BM 3577 / RP62A).